Here is a 126-residue protein sequence, read N- to C-terminus: Fluoride-specific ion channel FluC (126 aa).

4 consecutive transmembrane segments (helical) span residues 3-23 (PLGF…RWGL), 36-56 (YGTL…VGFF), 68-88 (LLAI…SSEA), and 99-119 (WALL…ALGL). Residues glycine 76 and threonine 79 each coordinate Na(+).

It belongs to the fluoride channel Fluc/FEX (TC 1.A.43) family.

The protein localises to the cell inner membrane. It carries out the reaction fluoride(in) = fluoride(out). Its activity is regulated as follows. Na(+) is not transported, but it plays an essential structural role and its presence is essential for fluoride channel function. Its function is as follows. Fluoride-specific ion channel. Important for reducing fluoride concentration in the cell, thus reducing its toxicity. In Cupriavidus pinatubonensis (strain JMP 134 / LMG 1197) (Cupriavidus necator (strain JMP 134)), this protein is Fluoride-specific ion channel FluC.